The chain runs to 352 residues: Diacylglycerol acyltransferase/mycolyltransferase Ag85C (352 aa).

The N-terminal stretch at 1–37 (MSFIEKVRKLRGAAATMPRRLAIAAVGASLLSGVAVA) is a signal peptide. Substrate is bound at residue 86–87 (LR). A fibronectin-binding region spans residues 102–112 (FEEFYQSGLSV). Residues S170 and N198 each coordinate substrate. S170 serves as the catalytic Nucleophile. The active site involves E274. Substrate is bound by residues 276–279 (LTLR) and 306–308 (HSW). H306 is an active-site residue. The interval 332 to 352 (TAAPAQPAQPAQPAQPAQPAT) is disordered. The span at 333 to 352 (AAPAQPAQPAQPAQPAQPAT) shows a compositional bias: low complexity.

This sequence belongs to the mycobacterial A85 antigen family. Homodimer.

It is found in the secreted. The catalysed reaction is an acyl-CoA + a 1,2-diacyl-sn-glycerol = a triacyl-sn-glycerol + CoA. The enzyme catalyses 2 alpha,alpha'-trehalose 6-mycolate = alpha,alpha'-trehalose 6,6'-bismycolate + alpha,alpha-trehalose. In terms of biological role, the antigen 85 proteins (FbpA, FbpB, FbpC) are responsible for the high affinity of mycobacteria to fibronectin, a large adhesive glycoprotein, which facilitates the attachment of M.tuberculosis to murine alveolar macrophages (AMs). They also help to maintain the integrity of the cell wall by catalyzing the transfer of mycolic acids to cell wall arabinogalactan and through the synthesis of alpha,alpha-trehalose dimycolate (TDM, cord factor). They catalyze the transfer of a mycoloyl residue from one molecule of alpha,alpha-trehalose monomycolate (TMM) to another TMM, leading to the formation of TDM. This Mycobacterium avium protein is Diacylglycerol acyltransferase/mycolyltransferase Ag85C (fbpC).